The chain runs to 440 residues: 23S rRNA (uracil(1939)-C(5))-methyltransferase RlmD (440 aa).

The region spanning Ser-11 to Lys-69 is the TRAM domain. [4Fe-4S] cluster contacts are provided by Cys-82, Cys-88, Cys-91, and Cys-169. S-adenosyl-L-methionine-binding residues include Gln-272, Phe-301, Asn-306, Glu-322, Asn-349, and Asp-370. The Nucleophile role is filled by Cys-396.

Belongs to the class I-like SAM-binding methyltransferase superfamily. RNA M5U methyltransferase family. RlmD subfamily.

The catalysed reaction is uridine(1939) in 23S rRNA + S-adenosyl-L-methionine = 5-methyluridine(1939) in 23S rRNA + S-adenosyl-L-homocysteine + H(+). Its function is as follows. Catalyzes the formation of 5-methyl-uridine at position 1939 (m5U1939) in 23S rRNA. The protein is 23S rRNA (uracil(1939)-C(5))-methyltransferase RlmD of Vibrio cholerae serotype O1 (strain M66-2).